The primary structure comprises 123 residues: Cliotide T4 (123 aa).

The first 28 residues, 1–28 (MASLRIAPLALFFFLAASVMFTVEKTEA), serve as a signal peptide directing secretion. Residues 29–58 (GIPCGESCVFIPCITAAIGCSCKSKVCYRN) constitute a cross-link (cyclopeptide (Gly-Asn)). Cystine bridges form between Cys32-Cys48, Cys36-Cys50, and Cys41-Cys55. Positions 59-123 (HVIAAEAKTM…KDHLKMSITN (65 aa)) are cleaved as a propeptide — removed in mature form.

In terms of processing, contains 3 disulfide bonds. This is a cyclic peptide. In terms of tissue distribution, expressed in flower, stem, shoot, root, leaf, seed, pod and nodule (at protein level).

Its function is as follows. Probably participates in a plant defense mechanism. Active against Gram-negative bacteria E.coli ATCC 700926 (MIC=1.0 uM), K.pneumoniae ATTC 13883 (MIC=5.5 uM) and P.aeruginosa ATCC 39018 (MIC=7.5 uM). Has hemolytic and cytotoxic activity. This chain is Cliotide T4, found in Clitoria ternatea (Butterfly pea).